Here is a 436-residue protein sequence, read N- to C-terminus: Protein arginine methyltransferase NDUFAF7, mitochondrial (436 aa).

The transit peptide at M1–H41 directs the protein to the mitochondrion. Residues G411–Q436 are disordered. Positions Q413–V427 are enriched in polar residues.

This sequence belongs to the NDUFAF7 family. As to quaternary structure, interacts with NDUFS2.

The protein localises to the mitochondrion. It carries out the reaction L-arginyl-[protein] + 2 S-adenosyl-L-methionine = N(omega),N(omega)'-dimethyl-L-arginyl-[protein] + 2 S-adenosyl-L-homocysteine + 2 H(+). Functionally, arginine methyltransferase involved in the assembly or stability of mitochondrial NADH:ubiquinone oxidoreductase complex (complex I). Acts by mediating symmetric dimethylation of 'Arg-118' of NDUFS2 after it assembles into the complex I, stabilizing the early intermediate complex. In Mus musculus (Mouse), this protein is Protein arginine methyltransferase NDUFAF7, mitochondrial.